Consider the following 125-residue polypeptide: Small ribosomal subunit protein eS8 (125 aa).

The tract at residues 1–20 (MIWQGRSRRKPSGGFYRKAR) is disordered.

It belongs to the eukaryotic ribosomal protein eS8 family. As to quaternary structure, part of the 30S ribosomal subunit.

The sequence is that of Small ribosomal subunit protein eS8 (rps8e) from Archaeoglobus fulgidus (strain ATCC 49558 / DSM 4304 / JCM 9628 / NBRC 100126 / VC-16).